We begin with the raw amino-acid sequence, 462 residues long: MAKNDKINFSTPSGFPEFLPSEKRLELYLLDTIRRVYESYGFTPIETPAVERLEVLQAKGNQGDNIIYGIDPILPPNRQAEKDKSGETGSEARALKFDQTVPLAAYIARHLNELTFPFARYQMDVVFRGERAKDGRFRQFRQCDIDVVGREKLSLLYDAQMPAIITEIFEAVHIGDFLIRINNRKVLTGFFQSLDISETQIKSCISIIDNLEKIGEAKVKLELEKEGINPEQTQKIIDFIKIDGSVDDVLDKLKHLSQTLPESEQFNLGVSELETVITGVRNLGVPDKRFCIDLAIARGLNYYTGTVYETTLIGHEALGSICSGGRYEELVGTFIGEKMPGVGISIGLTRLISRLLKAGILNTLPPTPAQVVVVNMQDNLMPTYLKVSQQLRQAGLNVITNFEKRQLGKQFQAADKQGIQFCVIIGADEAAAQKSSLKDLKSGEQVEVALADLPEEVKRRLT.

The protein belongs to the class-II aminoacyl-tRNA synthetase family. In terms of assembly, homodimer.

The protein resides in the cytoplasm. The enzyme catalyses tRNA(His) + L-histidine + ATP = L-histidyl-tRNA(His) + AMP + diphosphate + H(+). This Trichormus variabilis (strain ATCC 29413 / PCC 7937) (Anabaena variabilis) protein is Histidine--tRNA ligase.